A 498-amino-acid polypeptide reads, in one-letter code: uncharacterized protein (498 aa).

This is an uncharacterized protein from Acanthamoeba polyphaga (Amoeba).